A 752-amino-acid chain; its full sequence is Photosystem I P700 chlorophyll a apoprotein A1 (752 aa).

The next 8 membrane-spanning stretches (helical) occupy residues 73 to 96 (IFSA…FHGA), 159 to 182 (LYWT…FHYH), 198 to 222 (MNHH…HIAL), 294 to 312 (IAHH…GHMY), 349 to 372 (WHAQ…HHMY), 388 to 414 (LSLF…IFMV), 436 to 458 (AIIS…FYIH), and 533 to 551 (FMVH…LILL). Cys-575 and Cys-584 together coordinate [4Fe-4S] cluster. A run of 2 helical transmembrane segments spans residues 591–612 (HVFL…HFSW) and 666–688 (SSAY…MFLF). His-677 serves as a coordination point for chlorophyll a'. Chlorophyll a is bound by residues Met-685 and Tyr-693. Trp-694 is a phylloquinone binding site. Residues 726–746 (AVGLAHYLLGGIGTTWAFFLA) traverse the membrane as a helical segment.

The protein belongs to the PsaA/PsaB family. The PsaA/B heterodimer binds the P700 chlorophyll special pair and subsequent electron acceptors. PSI consists of a core antenna complex that captures photons, and an electron transfer chain that converts photonic excitation into a charge separation. The eukaryotic PSI reaction center is composed of at least 11 subunits. The cofactor is P700 is a chlorophyll a/chlorophyll a' dimer, A0 is one or more chlorophyll a, A1 is one or both phylloquinones and FX is a shared 4Fe-4S iron-sulfur center..

It localises to the plastid. The protein resides in the chloroplast thylakoid membrane. The enzyme catalyses reduced [plastocyanin] + hnu + oxidized [2Fe-2S]-[ferredoxin] = oxidized [plastocyanin] + reduced [2Fe-2S]-[ferredoxin]. Its function is as follows. PsaA and PsaB bind P700, the primary electron donor of photosystem I (PSI), as well as the electron acceptors A0, A1 and FX. PSI is a plastocyanin/cytochrome c6-ferredoxin oxidoreductase, converting photonic excitation into a charge separation, which transfers an electron from the donor P700 chlorophyll pair to the spectroscopically characterized acceptors A0, A1, FX, FA and FB in turn. Oxidized P700 is reduced on the lumenal side of the thylakoid membrane by plastocyanin or cytochrome c6. This chain is Photosystem I P700 chlorophyll a apoprotein A1, found in Thalassiosira pseudonana (Marine diatom).